A 316-amino-acid polypeptide reads, in one-letter code: Small neutral protease regulatory protein (316 aa).

Residues 1–56 enclose the HTH lysR-type domain; the sequence is MRHLRALCAIADTGSVRRAARELGVSQPALTTQLRRIEQSLGAELFHRGRDGCRPT. The H-T-H motif DNA-binding region spans 16–35; the sequence is VRRAARELGVSQPALTTQLR.

It belongs to the LysR transcriptional regulatory family.

Its function is as follows. Transcriptional trans-activator of the gene (mprA) for the small neutral protease. This chain is Small neutral protease regulatory protein (mprR), found in Streptomyces coelicolor.